A 668-amino-acid polypeptide reads, in one-letter code: Probable tRNA (uracil-O(2)-)-methyltransferase (668 aa).

Residues glutamine 441 to proline 460 form a disordered region. A C3H1-type zinc finger spans residues leucine 620 to glutamate 649.

The protein belongs to the TRM44 family.

The protein resides in the cytoplasm. It carries out the reaction uridine(44) in tRNA(Ser) + S-adenosyl-L-methionine = 2'-O-methyluridine(44) in tRNA(Ser) + S-adenosyl-L-homocysteine + H(+). Functionally, probable adenosyl-L-methionine (AdoMet)-dependent tRNA (uracil-O(2)-)-methyltransferase. This chain is Probable tRNA (uracil-O(2)-)-methyltransferase (trmt44), found in Xenopus laevis (African clawed frog).